We begin with the raw amino-acid sequence, 395 residues long: Calsequestrin-1 (395 aa).

Positions 1–28 (MNAADRMGARVALLLLLVLGSPQSGVHG) are cleaved as a signal peptide. Residue Y37 is modified to Phosphotyrosine. Position 75 is a phosphoserine (S75). T118 carries the phosphothreonine modification. Position 210 is a phosphoserine (S210). The N-linked (GlcNAc...) asparagine glycan is linked to N344. The segment at 376 to 395 (EGEINTEDDDDEDDDDDDDD) is disordered.

This sequence belongs to the calsequestrin family. In terms of assembly, monomer; increases in response to a depletion of intracellular calcium. Homodimer. Homotetramer and homopolymer. Can form linear homooligomers. Ca(2+) ions promote oligomerization. Interacts (via C-terminal end and preferentially with the monomeric form) with STIM1; this interaction increases in response to a depletion of intracellular calcium, decreases both STIM1 aggregation and clustering, interaction of STIM1 with ORAI1 and store-operated Ca(2+) entry (SOCE) activity. Interacts with ASPH and TRDN. Post-translationally, N-glycosylated. As to expression, detected in skeletal muscle (at protein level). Detected in skeletal muscle.

The protein localises to the endoplasmic reticulum. It localises to the sarcoplasmic reticulum. Its subcellular location is the sarcoplasmic reticulum lumen. The protein resides in the mitochondrion matrix. It is found in the sarcoplasmic reticulum membrane. Functionally, calsequestrin is a high-capacity, moderate affinity, calcium-binding protein and thus acts as an internal calcium store in muscle. Calcium ions are bound by clusters of acidic residues at the protein surface, often at the interface between subunits. Can bind around 80 Ca(2+) ions. Regulates the release of lumenal Ca(2+) via the calcium release channel RYR1; this plays an important role in triggering muscle contraction. Negatively regulates store-operated Ca(2+) entry (SOCE) activity. The sequence is that of Calsequestrin-1 (CASQ1) from Oryctolagus cuniculus (Rabbit).